Consider the following 525-residue polypeptide: GMP synthase [glutamine-hydrolyzing] (525 aa).

A Glutamine amidotransferase type-1 domain is found at 9-207 (RILILDFGSQ…VQDICGCEAL (199 aa)). C86 (nucleophile) is an active-site residue. Catalysis depends on residues H181 and E183. One can recognise a GMPS ATP-PPase domain in the interval 208–400 (WTASNIVEDA…LGLPYDMVYR (193 aa)). 235-241 (SGGVDSS) lines the ATP pocket.

As to quaternary structure, homodimer.

It carries out the reaction XMP + L-glutamine + ATP + H2O = GMP + L-glutamate + AMP + diphosphate + 2 H(+). The protein operates within purine metabolism; GMP biosynthesis; GMP from XMP (L-Gln route): step 1/1. Its function is as follows. Catalyzes the synthesis of GMP from XMP. The protein is GMP synthase [glutamine-hydrolyzing] of Pseudomonas putida (strain GB-1).